The sequence spans 312 residues: Gamma-soluble NSF attachment protein (312 aa).

The tract at residues 281-312 (KKKSPATPQAKPDGVTATAADEEEDEYSGGLC) is disordered. Serine 284 bears the Phosphoserine mark. Threonine 287 bears the Phosphothreonine mark. Residues 300-312 (ADEEEDEYSGGLC) show a composition bias toward acidic residues. Serine 308 bears the Phosphoserine mark.

It belongs to the SNAP family. Interacts with RAB11FIP5. Interacts with VTI1A.

Its subcellular location is the membrane. The protein resides in the golgi apparatus. Required for vesicular transport between the endoplasmic reticulum and the Golgi apparatus. The polypeptide is Gamma-soluble NSF attachment protein (Homo sapiens (Human)).